The primary structure comprises 887 residues: DNA mismatch repair protein MutS (887 aa).

ATP is bound at residue 602–609; sequence GPNMSGKS.

Belongs to the DNA mismatch repair MutS family.

This protein is involved in the repair of mismatches in DNA. It is possible that it carries out the mismatch recognition step. This protein has a weak ATPase activity. The protein is DNA mismatch repair protein MutS of Staphylococcus saprophyticus subsp. saprophyticus (strain ATCC 15305 / DSM 20229 / NCIMB 8711 / NCTC 7292 / S-41).